Here is an 872-residue protein sequence, read N- to C-terminus: Alanine--tRNA ligase (872 aa).

Zn(2+) contacts are provided by His-567, His-571, Cys-669, and His-673.

This sequence belongs to the class-II aminoacyl-tRNA synthetase family. Requires Zn(2+) as cofactor.

It is found in the cytoplasm. The enzyme catalyses tRNA(Ala) + L-alanine + ATP = L-alanyl-tRNA(Ala) + AMP + diphosphate. In terms of biological role, catalyzes the attachment of alanine to tRNA(Ala) in a two-step reaction: alanine is first activated by ATP to form Ala-AMP and then transferred to the acceptor end of tRNA(Ala). Also edits incorrectly charged Ser-tRNA(Ala) and Gly-tRNA(Ala) via its editing domain. The protein is Alanine--tRNA ligase of Streptococcus sanguinis (strain SK36).